The following is a 483-amino-acid chain: uncharacterized protein (483 aa).

This is an uncharacterized protein from Acanthamoeba polyphaga mimivirus (APMV).